A 251-amino-acid chain; its full sequence is 2,3-bisphosphoglycerate-dependent phosphoglycerate mutase (251 aa).

Residues 11–18, 24–25, Arg-63, 90–93, Lys-101, 117–118, and 185–186 contribute to the substrate site; these read RHGNSDWN, TG, ERHY, RR, and GN. The active-site Tele-phosphohistidine intermediate is His-12. Residue Glu-90 is the Proton donor/acceptor of the active site.

This sequence belongs to the phosphoglycerate mutase family. BPG-dependent PGAM subfamily.

It catalyses the reaction (2R)-2-phosphoglycerate = (2R)-3-phosphoglycerate. The protein operates within carbohydrate degradation; glycolysis; pyruvate from D-glyceraldehyde 3-phosphate: step 3/5. Functionally, catalyzes the interconversion of 2-phosphoglycerate and 3-phosphoglycerate. This is 2,3-bisphosphoglycerate-dependent phosphoglycerate mutase from Clavibacter sepedonicus (Clavibacter michiganensis subsp. sepedonicus).